Here is a 520-residue protein sequence, read N- to C-terminus: Probable protein phosphatase 2C 39 (520 aa).

Residues 160–507 form the PPM-type phosphatase domain; the sequence is FLTSTEIKMA…DDVTIIVIIL (348 aa). Positions 195, 196, 435, and 498 each coordinate Mn(2+).

This sequence belongs to the PP2C family. It depends on Mg(2+) as a cofactor. Mn(2+) serves as cofactor.

It carries out the reaction O-phospho-L-seryl-[protein] + H2O = L-seryl-[protein] + phosphate. The catalysed reaction is O-phospho-L-threonyl-[protein] + H2O = L-threonyl-[protein] + phosphate. In Oryza sativa subsp. japonica (Rice), this protein is Probable protein phosphatase 2C 39.